The chain runs to 412 residues: Putative competence-damage inducible protein (412 aa).

The protein belongs to the CinA family.

The chain is Putative competence-damage inducible protein from Bacillus mycoides (strain KBAB4) (Bacillus weihenstephanensis).